The chain runs to 345 residues: tRNA N6-adenosine threonylcarbamoyltransferase (345 aa).

His111 and His115 together coordinate Fe cation. Substrate is bound by residues 134–138 (LVSGG), Asp167, Gly180, and Asn276. Fe cation is bound at residue Asp304.

Belongs to the KAE1 / TsaD family. The cofactor is Fe(2+).

It localises to the cytoplasm. It catalyses the reaction L-threonylcarbamoyladenylate + adenosine(37) in tRNA = N(6)-L-threonylcarbamoyladenosine(37) in tRNA + AMP + H(+). Its function is as follows. Required for the formation of a threonylcarbamoyl group on adenosine at position 37 (t(6)A37) in tRNAs that read codons beginning with adenine. Is involved in the transfer of the threonylcarbamoyl moiety of threonylcarbamoyl-AMP (TC-AMP) to the N6 group of A37, together with TsaE and TsaB. TsaD likely plays a direct catalytic role in this reaction. The chain is tRNA N6-adenosine threonylcarbamoyltransferase from Alcanivorax borkumensis (strain ATCC 700651 / DSM 11573 / NCIMB 13689 / SK2).